The chain runs to 406 residues: Nicotinate phosphoribosyltransferase (406 aa).

A Phosphohistidine; by autocatalysis modification is found at H226.

This sequence belongs to the NAPRTase family. In terms of processing, transiently phosphorylated on a His residue during the reaction cycle. Phosphorylation strongly increases the affinity for substrates and increases the rate of nicotinate D-ribonucleotide production. Dephosphorylation regenerates the low-affinity form of the enzyme, leading to product release.

It catalyses the reaction nicotinate + 5-phospho-alpha-D-ribose 1-diphosphate + ATP + H2O = nicotinate beta-D-ribonucleotide + ADP + phosphate + diphosphate. Its pathway is cofactor biosynthesis; NAD(+) biosynthesis; nicotinate D-ribonucleotide from nicotinate: step 1/1. In terms of biological role, catalyzes the synthesis of beta-nicotinate D-ribonucleotide from nicotinate and 5-phospho-D-ribose 1-phosphate at the expense of ATP. The polypeptide is Nicotinate phosphoribosyltransferase (Verminephrobacter eiseniae (strain EF01-2)).